The following is a 554-amino-acid chain: uncharacterized protein (554 aa).

The protein to M.jannaschii MJ0047, MJ0162 and MJ1236.

This is an uncharacterized protein from Synechocystis sp. (strain ATCC 27184 / PCC 6803 / Kazusa).